Here is a 284-residue protein sequence, read N- to C-terminus: 2-dehydro-3-deoxyphosphooctonate aldolase (284 aa).

Belongs to the KdsA family.

The protein resides in the cytoplasm. The enzyme catalyses D-arabinose 5-phosphate + phosphoenolpyruvate + H2O = 3-deoxy-alpha-D-manno-2-octulosonate-8-phosphate + phosphate. It participates in carbohydrate biosynthesis; 3-deoxy-D-manno-octulosonate biosynthesis; 3-deoxy-D-manno-octulosonate from D-ribulose 5-phosphate: step 2/3. It functions in the pathway bacterial outer membrane biogenesis; lipopolysaccharide biosynthesis. The sequence is that of 2-dehydro-3-deoxyphosphooctonate aldolase from Enterobacter sp. (strain 638).